The primary structure comprises 295 residues: AP-1-like transcription factor YAP4 (295 aa).

Phosphoserine occurs at positions 85, 89, and 196. The segment covering 181 to 202 has biased composition (polar residues); that stretch reads ASYFPSNSTPATRKNSATTNLP. Positions 181-205 are disordered; sequence ASYFPSNSTPATRKNSATTNLPSEE. In terms of domain architecture, bZIP spans 237–295; sequence PLRNTKRAAQNRSAQKAFRQRREKYIKNLEEKSKLFDGLMKENSELKKMIESLKSKLKE. The tract at residues 239-260 is basic motif; it reads RNTKRAAQNRSAQKAFRQRREK. Residues 262–271 form a leucine-zipper region; it reads IKNLEEKSKL.

Belongs to the bZIP family. YAP subfamily. In terms of assembly, homodimer.

The protein resides in the cytoplasm. Its subcellular location is the nucleus. Transcription activator involved in the regulation of genes expressed in response to environmental changes and metabolic requirements. According to genome-wide promoter binding and gene expression studies it regulates, among others, genes involved in ribosome biogenesis, and protein synthesis. It may also be involved in pleiotropic drug resistance. When overexpressed it confers increased resistance to cisplatin, the DNA-alkylating agents methylmethanosulfonate, and mitomycin C, the antimalarial drugs quinidine, mefloquine, and chloroquine, and increases cellular tolerance to sodium and lithium. Preferentially binds 5'-TTACTAA-3'. The chain is AP-1-like transcription factor YAP4 (CIN5) from Saccharomyces cerevisiae (strain ATCC 204508 / S288c) (Baker's yeast).